A 770-amino-acid chain; its full sequence is Glutamate carboxypeptidase 2 homolog (770 aa).

Residues 1–19 (MPYVGVGAQKASTNLTGGP) lie on the Cytoplasmic side of the membrane. Residues 20-40 (MMKAYAFVLAFFLLGLGVLAL) traverse the membrane as a helical; Signal-anchor for type II membrane protein segment. Over 41-770 (GKHHSGRRFN…CVVNTLRDVI (730 aa)) the chain is Extracellular. Asn175 and Asn337 each carry an N-linked (GlcNAc...) asparagine glycan. Residues 282–597 (SKKELFKGRT…QYWAELAKTF (316 aa)) are catalytic. 2 residues coordinate Zn(2+): His387 and Asp397. A glycan (N-linked (GlcNAc...) asparagine) is linked at Asn417. Glu435 acts as the Nucleophile in catalysis. Positions 436 and 464 each coordinate Zn(2+). N-linked (GlcNAc...) asparagine glycosylation is found at Asn469 and Asn551. His562 is a binding site for Zn(2+). Asn606 and Asn630 each carry an N-linked (GlcNAc...) asparagine glycan.

The protein belongs to the peptidase M28 family. M28B subfamily. The cofactor is Zn(2+).

Its subcellular location is the membrane. It carries out the reaction Release of an unsubstituted, C-terminal glutamyl residue, typically from Ac-Asp-Glu or folylpoly-gamma-glutamates.. The polypeptide is Glutamate carboxypeptidase 2 homolog (Caenorhabditis briggsae).